Here is a 114-residue protein sequence, read N- to C-terminus: Probable 4-amino-4-deoxy-L-arabinose-phosphoundecaprenol flippase subunit ArnE (114 aa).

A run of 3 helical transmembrane segments spans residues 38-58, 64-84, and 94-114; these read LTLRWLAIAVVSLGLGMLLWL, LPLSVAYPMLSFNFVLVTLAA, and LRHWLGVAAIMFGILLMSWHL. The region spanning 43 to 112 is the EamA domain; it reads LAIAVVSLGL…IMFGILLMSW (70 aa).

Belongs to the ArnE family. In terms of assembly, heterodimer of ArnE and ArnF.

The protein resides in the cell inner membrane. Its pathway is bacterial outer membrane biogenesis; lipopolysaccharide biosynthesis. Functionally, translocates 4-amino-4-deoxy-L-arabinose-phosphoundecaprenol (alpha-L-Ara4N-phosphoundecaprenol) from the cytoplasmic to the periplasmic side of the inner membrane. The sequence is that of Probable 4-amino-4-deoxy-L-arabinose-phosphoundecaprenol flippase subunit ArnE from Yersinia pseudotuberculosis serotype O:3 (strain YPIII).